A 110-amino-acid polypeptide reads, in one-letter code: Large ribosomal subunit protein uL22 (110 aa).

Belongs to the universal ribosomal protein uL22 family. Part of the 50S ribosomal subunit.

This protein binds specifically to 23S rRNA; its binding is stimulated by other ribosomal proteins, e.g. L4, L17, and L20. It is important during the early stages of 50S assembly. It makes multiple contacts with different domains of the 23S rRNA in the assembled 50S subunit and ribosome. Functionally, the globular domain of the protein is located near the polypeptide exit tunnel on the outside of the subunit, while an extended beta-hairpin is found that lines the wall of the exit tunnel in the center of the 70S ribosome. In Mycoplasmopsis pulmonis (strain UAB CTIP) (Mycoplasma pulmonis), this protein is Large ribosomal subunit protein uL22.